Here is a 1132-residue protein sequence, read N- to C-terminus: Cytospin-A (1132 aa).

A disordered region spans residues 1-166 (MKKAGRPVGN…SKSDGQLSDK (166 aa)). Low complexity-rich tracts occupy residues 73–109 (STHS…SKES) and 119–129 (SRNSSSKKQSS). A compositionally biased stretch (basic and acidic residues) spans 150–159 (SESRMSKSKS). The stretch at 226-268 (DVESTLLLLQEQNQAIRGELNLLKNENRMLKDRLNALGFSLEQ) forms a coiled coil. The tract at residues 301–381 (ASSVEGSAPG…RKGSSGNTSE (81 aa)) is disordered. Over residues 333–343 (SEVYQAVTSSD) the composition is skewed to polar residues. The segment covering 348-377 (APSGCGSSSSSESEGGPPACRSSSRKGSSG) has biased composition (low complexity). Coiled-coil stretches lie at residues 385 to 440 (ACLT…MDSL) and 478 to 798 (RYME…RGRV). Disordered stretches follow at residues 869–895 (TSTT…AAAV) and 939–1016 (SRPA…RKDP). A compositionally biased stretch (pro residues) spans 875–889 (APLPRTPLSPSPMKT). Over residues 946-961 (QRVSNMDTSKTITVSR) the composition is skewed to polar residues. Basic and acidic residues predominate over residues 962 to 972 (RSSEEPKRDIS). Positions 979–1000 (ASSLISMSSAAALSSSSSPTAS) are enriched in low complexity. The Calponin-homology (CH) domain maps to 1026–1131 (GSKRNALLRW…YVTSIYKYFE (106 aa)).

Belongs to the cytospin-A family. As to quaternary structure, may interact with both microtubules and actin cytoskeleton.

The protein resides in the cytoplasm. It is found in the cytoskeleton. It localises to the spindle. Its subcellular location is the cell junction. The protein localises to the gap junction. Its function is as follows. Involved in cytokinesis and spindle organization. May play a role in actin cytoskeleton organization and microtubule stabilization and hence required for proper cell adhesion and migration. This chain is Cytospin-A (specc1la), found in Danio rerio (Zebrafish).